An 86-amino-acid chain; its full sequence is Protein P17 (86 aa).

Residues 63–86 (SPAEKPDNQPELTGITFEGDNNDQ) form a disordered region.

As to quaternary structure, homotetramer.

Functionally, assembly protein that acts late in phage assembly, after capsid protein folding and multimerization, and sorting of membrane proteins has occurred. The major coat protein P3 and two assembly factors (P10 and P17) are needed during the assembly of the virus particle inside the host cell, when the capsid protein multimers are capable of enclosing the host-derived membrane, containing the virus-encoded membrane-associated proteins. This chain is Protein P17 (XVII), found in Enterobacteria phage PRD1 (Bacteriophage PRD1).